We begin with the raw amino-acid sequence, 114 residues long: Flagellar hook-basal body complex protein FliE (114 aa).

The protein belongs to the FliE family.

The protein localises to the bacterial flagellum basal body. The polypeptide is Flagellar hook-basal body complex protein FliE (Desulfitobacterium hafniense (strain DSM 10664 / DCB-2)).